A 187-amino-acid chain; its full sequence is ECF RNA polymerase sigma factor SigK (187 aa).

A sigma-70 factor domain-2 region spans residues 30 to 96 (YDHTCTRVYG…RAVDRVRAEQ (67 aa)). The short motif at 53 to 56 (ETTQ) is the Interaction with polymerase core subunit RpoC element. The interval 133-182 (CLDGLTDTQRQCIELAYYGGLTYAEVSQRLATNLSTIKSRMRDALRGLRN) is sigma-70 factor domain-4. Residues 155–174 (YAEVSQRLATNLSTIKSRMR) constitute a DNA-binding region (H-T-H motif).

Belongs to the sigma-70 factor family. ECF subfamily. As to quaternary structure, interacts transiently with the RNA polymerase catalytic core formed by RpoA, RpoB, RpoC and RpoZ (2 alpha, 1 beta, 1 beta' and 1 omega subunit) to form the RNA polymerase holoenzyme that can initiate transcription. Interacts (via sigma-70 factor domain 4) with anti-sigma-K factor RskA.

Functionally, sigma factors are initiation factors that promote the attachment of RNA polymerase to specific initiation sites and are then released. Extracytoplasmic function (ECF) sigma factors are held in an inactive form by an anti-sigma factor until released by regulated intramembrane proteolysis. The polypeptide is ECF RNA polymerase sigma factor SigK (sigK) (Mycobacterium ulcerans (strain Agy99)).